A 70-amino-acid polypeptide reads, in one-letter code: Large ribosomal subunit protein eL38 (70 aa).

Belongs to the eukaryotic ribosomal protein eL38 family.

The protein is Large ribosomal subunit protein eL38 (RPL38) of Branchiostoma belcheri (Amphioxus).